Consider the following 303-residue polypeptide: Mitochondrial basic amino acids transporter (303 aa).

Transmembrane regions (helical) follow at residues 2–22, 61–81, 96–116, 153–172, 187–207, and 255–275; these read ALDF…GHPF, GLGS…GVQG, FLAG…MELA, GMVS…FLTY, LLVP…WLST, and LLRA…VLTY. 3 Solcar repeats span residues 2-86, 90-178, and 185-275; these read ALDF…TLRA, DSPL…LTRA, and DRLL…VLTY. Positions 282–303 are disordered; that stretch reads GPEGEAVPAAPAGPALAQPSSL. Residues 284-303 are compositionally biased toward low complexity; the sequence is EGEAVPAAPAGPALAQPSSL.

It belongs to the mitochondrial carrier (TC 2.A.29) family.

The protein resides in the mitochondrion inner membrane. The catalysed reaction is L-lysine(out) + L-arginine(in) = L-lysine(in) + L-arginine(out). It catalyses the reaction L-histidine(out) + L-arginine(in) = L-histidine(in) + L-arginine(out). It carries out the reaction L-ornithine(in) + L-arginine(out) = L-ornithine(out) + L-arginine(in). The enzyme catalyses L-homoarginine(in) + L-arginine(out) = L-homoarginine(out) + L-arginine(in). The catalysed reaction is N(omega)-methyl-L-arginine(in) + L-arginine(out) = N(omega)-methyl-L-arginine(out) + L-arginine(in). It catalyses the reaction L-arginine(in) = L-arginine(out). It carries out the reaction L-lysine(in) = L-lysine(out). The enzyme catalyses L-ornithine(in) = L-ornithine(out). The catalysed reaction is L-histidine(out) = L-histidine(in). Functionally, mitochondrial transporter of arginine, lysine, homoarginine, methylarginine and, to a much lesser extent, ornithine and histidine. Does not transport carnitine nor acylcarnitines. Functions by both counter-exchange and uniport mechanisms. Plays a physiological role in the import of basic amino acids into mitochondria for mitochondrial protein synthesis and amino acid degradation. The polypeptide is Mitochondrial basic amino acids transporter (Homo sapiens (Human)).